The following is a 372-amino-acid chain: 4-hydroxy-3-methylbut-2-en-1-yl diphosphate synthase (flavodoxin) (372 aa).

[4Fe-4S] cluster-binding residues include C270, C273, C305, and E312.

The protein belongs to the IspG family. The cofactor is [4Fe-4S] cluster.

The catalysed reaction is (2E)-4-hydroxy-3-methylbut-2-enyl diphosphate + oxidized [flavodoxin] + H2O + 2 H(+) = 2-C-methyl-D-erythritol 2,4-cyclic diphosphate + reduced [flavodoxin]. Its pathway is isoprenoid biosynthesis; isopentenyl diphosphate biosynthesis via DXP pathway; isopentenyl diphosphate from 1-deoxy-D-xylulose 5-phosphate: step 5/6. Converts 2C-methyl-D-erythritol 2,4-cyclodiphosphate (ME-2,4cPP) into 1-hydroxy-2-methyl-2-(E)-butenyl 4-diphosphate. The protein is 4-hydroxy-3-methylbut-2-en-1-yl diphosphate synthase (flavodoxin) of Salmonella paratyphi B (strain ATCC BAA-1250 / SPB7).